The primary structure comprises 520 residues: ADP,ATP carrier protein 4 (520 aa).

12 helical membrane-spanning segments follow: residues L43–I63, I80–V100, I111–F131, F166–W186, F201–E221, F240–I260, L305–K325, A339–L359, F370–V390, L399–I419, L462–S482, and S485–V505.

The protein belongs to the ADP/ATP translocase tlc family.

It is found in the cell membrane. Its function is as follows. Provides the rickettsial cell with host ATP in exchange for rickettsial ADP. This is an obligate exchange system. This energy acquiring activity is an important component of rickettsial parasitism. The protein is ADP,ATP carrier protein 4 (tlcD) of Rickettsia bellii (strain RML369-C).